A 582-amino-acid chain; its full sequence is ATP-dependent lipid A-core flippase (582 aa).

A run of 5 helical transmembrane segments spans residues 16–36 (LWPTIAPFKAGLIVAGIALIL), 64–84 (LLWMPLVVIGLMILRGITSYI), 153–173 (IIGLFIMMFYYSWQLSIILVV), 253–273 (PIIQLIASLALAFVLYAASFP), and 275–295 (VMDSLTAGTITVVFSSMIALM). An ABC transmembrane type-1 domain is found at 28–310 (IVAGIALILN…LTNVNAQFQR (283 aa)). One can recognise an ABC transporter domain in the interval 342–578 (LEFRNVTFTY…HGVYAQLHKM (237 aa)). Residue 376 to 383 (GRSGSGKS) participates in ATP binding.

This sequence belongs to the ABC transporter superfamily. Lipid exporter (TC 3.A.1.106) family. As to quaternary structure, homodimer.

It is found in the cell inner membrane. The catalysed reaction is ATP + H2O + lipid A-core oligosaccharideSide 1 = ADP + phosphate + lipid A-core oligosaccharideSide 2.. Functionally, involved in lipopolysaccharide (LPS) biosynthesis. Translocates lipid A-core from the inner to the outer leaflet of the inner membrane. Transmembrane domains (TMD) form a pore in the inner membrane and the ATP-binding domain (NBD) is responsible for energy generation. This is ATP-dependent lipid A-core flippase from Salmonella choleraesuis (strain SC-B67).